Reading from the N-terminus, the 115-residue chain is Cytochrome c oxidase assembly protein COX16 homolog, mitochondrial (115 aa).

The Mitochondrial matrix segment spans residues 1–6; sequence MSRLKF. A helical membrane pass occupies residues 7–29; the sequence is VRVGLPFFAIVLGSAYGLHFFQQ. At 30 to 115 the chain is on the mitochondrial intermembrane side; that stretch reads VRFDFRKIKQ…RKVRELKSNV (86 aa).

The protein belongs to the COX16 family.

Its subcellular location is the mitochondrion inner membrane. In terms of biological role, required for the assembly of the mitochondrial respiratory chain complex IV (CIV), also known as cytochrome c oxidase. The polypeptide is Cytochrome c oxidase assembly protein COX16 homolog, mitochondrial (Caenorhabditis elegans).